Here is a 366-residue protein sequence, read N- to C-terminus: Anhydro-N-acetylmuramic acid kinase (366 aa).

10–17 (GTSMDGID) contacts ATP.

This sequence belongs to the anhydro-N-acetylmuramic acid kinase family.

It catalyses the reaction 1,6-anhydro-N-acetyl-beta-muramate + ATP + H2O = N-acetyl-D-muramate 6-phosphate + ADP + H(+). It functions in the pathway amino-sugar metabolism; 1,6-anhydro-N-acetylmuramate degradation. Its pathway is cell wall biogenesis; peptidoglycan recycling. Functionally, catalyzes the specific phosphorylation of 1,6-anhydro-N-acetylmuramic acid (anhMurNAc) with the simultaneous cleavage of the 1,6-anhydro ring, generating MurNAc-6-P. Is required for the utilization of anhMurNAc either imported from the medium or derived from its own cell wall murein, and thus plays a role in cell wall recycling. This chain is Anhydro-N-acetylmuramic acid kinase, found in Legionella pneumophila subsp. pneumophila (strain Philadelphia 1 / ATCC 33152 / DSM 7513).